The primary structure comprises 321 residues: UDP-N-acetyl-alpha-D-glucosaminuronate decarboxylase (321 aa).

Residues Gly-12, Phe-13, Ile-14, Asp-33, Asn-34, Tyr-36, Gly-38, Leu-76, Thr-95, Ala-117, Tyr-148, and Lys-152 each contribute to the NAD(+) site. Tyr-148 functions as the Proton acceptor in the catalytic mechanism.

It belongs to the NAD(P)-dependent epimerase/dehydratase family. In terms of assembly, homodimer. The cofactor is NAD(+).

The enzyme catalyses UDP-2-acetamido-2-deoxy-alpha-D-glucuronate + H(+) = UDP-N-acetyl-alpha-D-xylosamine + CO2. Activity is completely inhibited by NADH but not by NADPH. Decarboxylase involved in the biosynthesis of the nucleotide-sugar UDP-N-acetylxylosamine (UDP-XylNAc). Catalyzes the NAD-dependent decarboxylation of UDP-N-acetylglucosaminuronic acid (UDP-GlcNAcA) to UDP-XylNAc. Cannot use other UDP-uronates, such as UDP-glucuronic acid (UDP-GlcA) and UDP-galacturonic acid (UDP-GalA). In Bacillus cytotoxicus (strain DSM 22905 / CIP 110041 / 391-98 / NVH 391-98), this protein is UDP-N-acetyl-alpha-D-glucosaminuronate decarboxylase.